The sequence spans 371 residues: Transcriptional regulator of yeast form adherence 2 (371 aa).

Residues 16 to 44 (RNPAVLCSFYSKIGACRHGEKCSKKHLKP) form a C3H1-type 1 zinc finger. Over residues 94-107 (TVSQIDDSPHSNSG) the composition is skewed to polar residues. Residues 94 to 194 (TVSQIDDSPH…NIEDAKLEDT (101 aa)) form a disordered region. The segment covering 115 to 124 (VETQEVETEN) has biased composition (acidic residues). The span at 132–194 (GDVKIDHNED…NIEDAKLEDT (63 aa)) shows a compositional bias: basic and acidic residues. Positions 192–279 (EDTEKDKLPE…KPVYSDLSPV (88 aa)) constitute an RRM domain. The C3H1-type 2 zinc finger occupies 281 to 309 (DFNDACCEEYRDYHDCQRGAMCNYMHVRL). The segment at 337–371 (ELPGDIRSSSSTNDDETNGNENGISSTMAVLEQLS) is disordered. The segment covering 355–371 (GNENGISSTMAVLEQLS) has biased composition (polar residues).

It localises to the nucleus. In terms of biological role, transcription factor required for yeast cell adherence to silicone substrate. The protein is Transcriptional regulator of yeast form adherence 2 (TRY2) of Candida albicans (strain SC5314 / ATCC MYA-2876) (Yeast).